The sequence spans 65 residues: Myotoxin-1 (65 aa).

The signal sequence occupies residues 1-22 (MKILYLLFAFLFLAFLSEPGNA). 3 cysteine pairs are disulfide-bonded: C26-C58, C33-C52, and C40-C59.

This sequence belongs to the crotamine-myotoxin family. Monomer. As to expression, expressed by the venom gland.

It is found in the secreted. Functionally, cationic peptide that possesses multiple functions. It acts as a cell-penetrating peptide (CPP), and as a potent voltage-gated potassium channel (Kv) inhibitor. It exhibits antimicrobial activities, hind limb paralysis, and severe muscle necrosis by a non-enzymatic mechanism. In Crotalus durissus terrificus (South American rattlesnake), this protein is Myotoxin-1.